Reading from the N-terminus, the 375-residue chain is WAT1-related protein At1g70260 (375 aa).

The next 10 helical transmembrane spans lie at 10–30, 41–61, 72–92, 106–126, 143–163, 191–211, 225–245, 259–278, 289–309, and 312–332; these read LVPF…TIMA, FVFV…FSFL, IFSW…IFMF, IVVC…SIIL, MGTI…GPFI, WFLG…FNVV, VASF…LFME, LYLI…SVHV, VPLF…SFFV, and LHYG…TVSW. An EamA domain is found at 25–134; that stretch reads ALTIMAKTAL…ILGRSKLDWR (110 aa). The segment at 337 to 356 is disordered; it reads ESEEKQSSNEERKSIKTIHH.

The protein belongs to the drug/metabolite transporter (DMT) superfamily. Plant drug/metabolite exporter (P-DME) (TC 2.A.7.4) family.

It is found in the membrane. This is WAT1-related protein At1g70260 from Arabidopsis thaliana (Mouse-ear cress).